The primary structure comprises 310 residues: Tagatose-6-phosphate kinase (310 aa).

It belongs to the carbohydrate kinase PfkB family. LacC subfamily.

The catalysed reaction is D-tagatofuranose 6-phosphate + ATP = D-tagatofuranose 1,6-bisphosphate + ADP + H(+). It functions in the pathway carbohydrate metabolism; D-tagatose 6-phosphate degradation; D-glyceraldehyde 3-phosphate and glycerone phosphate from D-tagatose 6-phosphate: step 1/2. This Staphylococcus aureus (strain bovine RF122 / ET3-1) protein is Tagatose-6-phosphate kinase.